Here is a 593-residue protein sequence, read N- to C-terminus: Vitamin H transporter (593 aa).

At 1 to 121 the chain is on the extracellular side; sequence MTISNKSWRS…TTQTKAERRL (121 aa). Phosphoserine occurs at positions 32, 33, and 43. Residues 122–142 traverse the membrane as a helical segment; that stretch reads LYKLDIIIALYFFMLCWSKSV. At 143–166 the chain is on the cytoplasmic side; sequence DLNNYTNAYVSNMKEDLNMKGNDY. Residues 167–187 traverse the membrane as a helical segment; sequence VYTSTIANVGAIVFQLPFMYL. Over 188 to 190 the chain is Extracellular; sequence LPR. A helical membrane pass occupies residues 191-211; it reads FPSHIILPVMDLGWTWFTFAC. The Cytoplasmic segment spans residues 212–224; sequence YRANSLAELRAYR. The chain crosses the membrane as a helical span at residues 225 to 245; it reads FILSAFGAAYYPVSQYILGCW. The Extracellular portion of the chain corresponds to 246–291; that stretch reads YAPDEINSRVCLFFCGQQLGSVTSGLLQSRIFKSLNGVHGLAGWRW. Residues 292–312 traverse the membrane as a helical segment; that stretch reads MFLIDAIAISLPTAIIGFFVI. Over 313 to 361 the chain is Cytoplasmic; that stretch reads PGVPSKCYSLFLTDEEIRIARARNKRNQIKDGVDKSKLAPLWSRKLWKK. A helical membrane pass occupies residues 362-382; the sequence is VFCTPAFWVLVVFDTCSWNNM. Topologically, residues 383 to 408 are extracellular; the sequence is TAYSGSYTLWLKSNTKYSIAQVNNLS. A helical transmembrane segment spans residues 409-429; it reads VIPACLGFAYVIFCAFGADLF. Residues 430-432 are Cytoplasmic-facing; sequence RCK. Residues 433 to 453 traverse the membrane as a helical segment; that stretch reads WIFMVFAAIMNTVSCALLIKW. Residues 454–460 are Extracellular-facing; the sequence is DIPSKAK. A helical membrane pass occupies residues 461-481; it reads WYAFFTTYFSVAASPCLWSFI. The Cytoplasmic segment spans residues 482–492; the sequence is NDFLRFDPQVK. Residues 493-513 traverse the membrane as a helical segment; the sequence is AITWIAIYSFSQSTYAWIPTL. At 514 to 526 the chain is on the extracellular side; that stretch reads AWPTVESPRFKTG. A helical membrane pass occupies residues 527 to 547; that stretch reads YTVSLIFGAIYGLWTFVVLFF. Residues 548–593 lie on the Cytoplasmic side of the membrane; the sequence is YKRNEKKHALGNGIILYDSNKGEELPEFVKKNMEERDGYYYLKRSS.

The protein belongs to the major facilitator superfamily. Allantoate permease family.

It is found in the cell membrane. Functionally, involved in uptake of biotin with the concomitant entry of protons. In Saccharomyces cerevisiae (strain ATCC 204508 / S288c) (Baker's yeast), this protein is Vitamin H transporter (VHT1).